The following is a 565-amino-acid chain: Histone acetyltransferase ESA1 (565 aa).

Residues 1–33 (MAPRTQKSTSGTPGGSGTPGPDEGPQISPGGTY) are disordered. A Tudor-knot domain is found at 38-117 (VVVGCKAFVQ…DEWVSGTRLI (80 aa)). The tract at residues 173 to 217 (AQAAKNVQGESGLETPQKRKADSGDTSTAQSIRADSIDADADGED) is disordered. Residues 284–553 (ARVKNLNKIQ…INPQKLHWTA (270 aa)) enclose the MYST-type HAT domain. The segment at 317–342 (LYICEMCLSYFPSPFTLKRHRSKCTL) adopts a C2HC MYST-type zinc-finger fold. The ESA1-RPD3 motif signature appears at 367-388 (RTWCRNLCLLSKCFLDHKTLYY). K384 is modified (N6-acetyllysine; by autocatalysis). Acetyl-CoA contacts are provided by residues 425-429 (ACILT) and 434-440 (QRAGYGK). The Proton donor/acceptor role is filled by E460. Position 464 (S464) interacts with acetyl-CoA.

This sequence belongs to the MYST (SAS/MOZ) family. As to quaternary structure, component of the NuA4 histone acetyltransferase complex. In terms of processing, autoacetylation at Lys-384 is required for proper function.

It is found in the nucleus. The protein localises to the chromosome. It catalyses the reaction L-lysyl-[histone] + acetyl-CoA = N(6)-acetyl-L-lysyl-[histone] + CoA + H(+). The catalysed reaction is L-lysyl-[protein] + acetyl-CoA = N(6)-acetyl-L-lysyl-[protein] + CoA + H(+). It carries out the reaction 2-hydroxyisobutanoyl-CoA + L-lysyl-[protein] = N(6)-(2-hydroxyisobutanoyl)-L-lysyl-[protein] + CoA + H(+). The enzyme catalyses (2E)-butenoyl-CoA + L-lysyl-[protein] = N(6)-(2E)-butenoyl-L-lysyl-[protein] + CoA + H(+). In terms of biological role, catalytic component of the NuA4 histone acetyltransferase (HAT) complex which is involved in epigenetic transcriptional activation of selected genes principally by acetylation of nucleosomal histones H4, H3, H2B, H2A and H2A variant H2A.Z. Acetylates histone H4 to form H4K5ac, H4K8ac, H4K12ac and H4K16ac, histone H3 to form H3K14ac, and histone H2A to form H2AK4ac and H2AK7ac. The NuA4 complex is involved in the DNA damage response and is required for chromosome segregation. The NuA4 complex plays a direct role in repair of DNA double-strand breaks (DSBs) through homologous recombination. Recruitment to promoters depends on H3K4me. Also acetylates non-histone proteins. In addition to protein acetyltransferase, can use different acyl-CoA substrates, such as 2-hydroxyisobutanoyl-CoA (2-hydroxyisobutyryl-CoA) or (2E)-butenoyl-CoA (crotonyl-CoA), and is able to mediate protein 2-hydroxyisobutyrylation and crotonylation, respectively. The protein is Histone acetyltransferase ESA1 (ESA1) of Mycosarcoma maydis (Corn smut fungus).